Reading from the N-terminus, the 100-residue chain is Small ribosomal subunit protein uS14c (100 aa).

This sequence belongs to the universal ribosomal protein uS14 family. Part of the 30S ribosomal subunit.

It is found in the plastid. The protein localises to the chloroplast. Its function is as follows. Binds 16S rRNA, required for the assembly of 30S particles. This Zygnema circumcarinatum (Green alga) protein is Small ribosomal subunit protein uS14c.